The primary structure comprises 251 residues: 2,3-bisphosphoglycerate-dependent phosphoglycerate mutase (251 aa).

Residues 11 to 18 (RHGNSDWN), 24 to 25 (TG), Arg63, 90 to 93 (ERHY), Lys101, 117 to 118 (RR), and 185 to 186 (GN) contribute to the substrate site. His12 serves as the catalytic Tele-phosphohistidine intermediate. The Proton donor/acceptor role is filled by Glu90.

Belongs to the phosphoglycerate mutase family. BPG-dependent PGAM subfamily.

The enzyme catalyses (2R)-2-phosphoglycerate = (2R)-3-phosphoglycerate. It functions in the pathway carbohydrate degradation; glycolysis; pyruvate from D-glyceraldehyde 3-phosphate: step 3/5. Its function is as follows. Catalyzes the interconversion of 2-phosphoglycerate and 3-phosphoglycerate. In Clavibacter sepedonicus (Clavibacter michiganensis subsp. sepedonicus), this protein is 2,3-bisphosphoglycerate-dependent phosphoglycerate mutase.